The following is a 100-amino-acid chain: uncharacterized protein (100 aa).

This is an uncharacterized protein from Haemophilus influenzae (strain ATCC 51907 / DSM 11121 / KW20 / Rd).